The chain runs to 220 residues: UPF0502 protein PSPPH_2577 (220 aa).

Belongs to the UPF0502 family.

The protein is UPF0502 protein PSPPH_2577 of Pseudomonas savastanoi pv. phaseolicola (strain 1448A / Race 6) (Pseudomonas syringae pv. phaseolicola (strain 1448A / Race 6)).